The primary structure comprises 148 residues: NADH-quinone oxidoreductase subunit K 2 (148 aa).

The next 3 membrane-spanning stretches (helical) occupy residues 3 to 23, 28 to 48, and 64 to 84; these read LAYP…GVLA, ILVL…LVAF, and LFTI…VLAV. Residues 96–148 form a disordered region; sequence LRDTAETDAAETLPDDAGTGPSGTDAAPNGDTTTATGRPGDNAGKNKKAEATR.

It belongs to the complex I subunit 4L family. As to quaternary structure, NDH-1 is composed of 14 different subunits. Subunits NuoA, H, J, K, L, M, N constitute the membrane sector of the complex.

It is found in the cell membrane. It carries out the reaction a quinone + NADH + 5 H(+)(in) = a quinol + NAD(+) + 4 H(+)(out). In terms of biological role, NDH-1 shuttles electrons from NADH, via FMN and iron-sulfur (Fe-S) centers, to quinones in the respiratory chain. The immediate electron acceptor for the enzyme in this species is believed to be a menaquinone. Couples the redox reaction to proton translocation (for every two electrons transferred, four hydrogen ions are translocated across the cytoplasmic membrane), and thus conserves the redox energy in a proton gradient. This Streptomyces griseus subsp. griseus (strain JCM 4626 / CBS 651.72 / NBRC 13350 / KCC S-0626 / ISP 5235) protein is NADH-quinone oxidoreductase subunit K 2.